A 122-amino-acid polypeptide reads, in one-letter code: Small ribosomal subunit protein uS13 (122 aa).

The segment at 97–122 (PVRGQRTKTNARTRKGPARTVAGKKK) is disordered.

The protein belongs to the universal ribosomal protein uS13 family. In terms of assembly, part of the 30S ribosomal subunit. Forms a loose heterodimer with protein S19. Forms two bridges to the 50S subunit in the 70S ribosome.

Located at the top of the head of the 30S subunit, it contacts several helices of the 16S rRNA. In the 70S ribosome it contacts the 23S rRNA (bridge B1a) and protein L5 of the 50S subunit (bridge B1b), connecting the 2 subunits; these bridges are implicated in subunit movement. Contacts the tRNAs in the A and P-sites. The protein is Small ribosomal subunit protein uS13 of Geobacter sulfurreducens (strain ATCC 51573 / DSM 12127 / PCA).